The following is a 213-amino-acid chain: NADH-quinone oxidoreductase subunit I (213 aa).

2 consecutive 4Fe-4S ferredoxin-type domains span residues 74-103 (RFIE…METS) and 113-142 (GNYS…HGTE). Residues Cys83, Cys86, Cys89, Cys93, Cys122, Cys125, Cys128, and Cys132 each coordinate [4Fe-4S] cluster.

Belongs to the complex I 23 kDa subunit family. As to quaternary structure, NDH-1 is composed of 14 different subunits. Subunits NuoA, H, J, K, L, M, N constitute the membrane sector of the complex. Requires [4Fe-4S] cluster as cofactor.

It is found in the cell inner membrane. It catalyses the reaction a quinone + NADH + 5 H(+)(in) = a quinol + NAD(+) + 4 H(+)(out). Its function is as follows. NDH-1 shuttles electrons from NADH, via FMN and iron-sulfur (Fe-S) centers, to quinones in the respiratory chain. The immediate electron acceptor for the enzyme in this species is believed to be ubiquinone. Couples the redox reaction to proton translocation (for every two electrons transferred, four hydrogen ions are translocated across the cytoplasmic membrane), and thus conserves the redox energy in a proton gradient. The sequence is that of NADH-quinone oxidoreductase subunit I from Campylobacter jejuni subsp. jejuni serotype O:6 (strain 81116 / NCTC 11828).